Here is a 511-residue protein sequence, read N- to C-terminus: Bifunctional purine biosynthesis protein PurH (511 aa).

Residues 1-145 form the MGS-like domain; sequence MKKRALVSVS…KNHKFVSVIV (145 aa).

This sequence belongs to the PurH family.

It carries out the reaction (6R)-10-formyltetrahydrofolate + 5-amino-1-(5-phospho-beta-D-ribosyl)imidazole-4-carboxamide = 5-formamido-1-(5-phospho-D-ribosyl)imidazole-4-carboxamide + (6S)-5,6,7,8-tetrahydrofolate. The catalysed reaction is IMP + H2O = 5-formamido-1-(5-phospho-D-ribosyl)imidazole-4-carboxamide. The protein operates within purine metabolism; IMP biosynthesis via de novo pathway; 5-formamido-1-(5-phospho-D-ribosyl)imidazole-4-carboxamide from 5-amino-1-(5-phospho-D-ribosyl)imidazole-4-carboxamide (10-formyl THF route): step 1/1. It participates in purine metabolism; IMP biosynthesis via de novo pathway; IMP from 5-formamido-1-(5-phospho-D-ribosyl)imidazole-4-carboxamide: step 1/1. In Bacillus cereus (strain ZK / E33L), this protein is Bifunctional purine biosynthesis protein PurH.